The following is a 256-amino-acid chain: Trans-aconitate 2-methyltransferase (256 aa).

It belongs to the methyltransferase superfamily. Tam family.

Its subcellular location is the cytoplasm. It carries out the reaction trans-aconitate + S-adenosyl-L-methionine = (E)-3-(methoxycarbonyl)pent-2-enedioate + S-adenosyl-L-homocysteine. Functionally, catalyzes the S-adenosylmethionine monomethyl esterification of trans-aconitate. The protein is Trans-aconitate 2-methyltransferase of Rhizobium etli (strain ATCC 51251 / DSM 11541 / JCM 21823 / NBRC 15573 / CFN 42).